The chain runs to 872 residues: Metabotropic glutamate receptor 2 (872 aa).

Positions 1 to 18 (MESLLGFLALLLLWGAVA) are cleaved as a signal peptide. Residues 19-567 (EGPAKKVLTL…QEYIRWGDAW (549 aa)) are Extracellular-facing. Cys50 and Cys92 form a disulfide bridge. Arg57, Arg61, Ser145, Ala166, and Thr168 together coordinate L-glutamate. N-linked (GlcNAc...) asparagine glycans are attached at residues Asn203 and Asn286. 7 cysteine pairs are disulfide-bonded: Cys234/Cys518, Cys355/Cys362, Cys400/Cys407, Cys500/Cys519, Cys504/Cys522, Cys525/Cys537, and Cys540/Cys553. Position 295 (Asp295) interacts with L-glutamate. Asn338 carries N-linked (GlcNAc...) asparagine glycosylation. Residue Lys377 coordinates L-glutamate. Asn402 carries an N-linked (GlcNAc...) asparagine glycan. Asn547 is a glycosylation site (N-linked (GlcNAc...) asparagine). Residues 568–590 (AVGPVTIACLGALATLFVLGVFV) traverse the membrane as a helical segment. Topologically, residues 591–604 (RHNATPVVKASGRE) are cytoplasmic. The chain crosses the membrane as a helical span at residues 605–625 (LCYILLGGVFLCYCMTFVFIA). The Extracellular segment spans residues 626 to 636 (KPSTAVCTLRR). Cys632 and Cys721 are joined by a disulfide. Residues 637-655 (LGLGTAFSVCYSALLTKTN) traverse the membrane as a helical segment. Over 656–679 (RIARIFGGAREGAQRPRFISPASQ) the chain is Cytoplasmic. Residues 677 to 685 (ASQVAICLA) are important for interaction with HTR2A. A helical membrane pass occupies residues 680–700 (VAICLALISGQLLIVAAWLVV). The Extracellular segment spans residues 701 to 725 (EAPGTGKETAPERREVVTLRCNHRD). The helical transmembrane segment at 726-747 (ASMLGSLAYNVLLIALCTLYAF) threads the bilayer. Residues 748–760 (KTRKCPENFNEAK) lie on the Cytoplasmic side of the membrane. A helical membrane pass occupies residues 761-783 (FIGFTMYTTCIIWLAFLPIFYVT). Residues 784 to 793 (SSDYRVQTTT) are Extracellular-facing. A helical membrane pass occupies residues 794-819 (MCVSVSLSGSVVLGCLFAPKLHIILF). The Cytoplasmic segment spans residues 820-872 (QPQKNVVSHRAPTSRFGSAAPRASANLGQGSGSQFVPTVCNGREVVDSTTSSL).

Belongs to the G-protein coupled receptor 3 family. In terms of assembly, forms heterodimers with GRM3 or GRM4. Interacts with GNAI1. Interacts with TAMALIN. Interacts with HTR2A. In terms of tissue distribution, is widely distributed in the CNS and prominent expression is seen in Golgi cells of the cerebellum and some particular neuronal cells in other brain regions.

It is found in the cell membrane. Its subcellular location is the synapse. The protein resides in the cell projection. It localises to the dendrite. Functionally, dimeric G protein-coupled receptor which is activated by the excitatory neurotransmitter L-glutamate. Plays critical roles in modulating synaptic transmission and neuronal excitability. Upon activation by glutamate, inhibits presynaptic calcium channels, reducing further glutamate release and dampening excitatory signaling. Mechanistically, ligand binding causes a conformation change that triggers signaling via guanine nucleotide-binding proteins (G proteins) and modulates the activity of down-stream effectors, such as adenylate cyclase. May mediate suppression of neurotransmission or may be involved in synaptogenesis or synaptic stabilization. This is Metabotropic glutamate receptor 2 (Grm2) from Rattus norvegicus (Rat).